Here is a 903-residue protein sequence, read N- to C-terminus: Protein translocase subunit SecA (903 aa).

ATP-binding positions include glutamine 87, 105–109, and aspartate 494; that span reads GEGKT. Positions 861–883 are disordered; sequence SGSQGAAPRQPVRAEGKKVGRND. Residues 872–881 show a composition bias toward basic and acidic residues; the sequence is VRAEGKKVGR. Zn(2+) contacts are provided by cysteine 885, cysteine 887, cysteine 896, and cysteine 897.

This sequence belongs to the SecA family. As to quaternary structure, monomer and homodimer. Part of the essential Sec protein translocation apparatus which comprises SecA, SecYEG and auxiliary proteins SecDF. Other proteins may also be involved. Zn(2+) is required as a cofactor.

The protein localises to the cell membrane. Its subcellular location is the cytoplasm. It catalyses the reaction ATP + H2O + cellular proteinSide 1 = ADP + phosphate + cellular proteinSide 2.. In terms of biological role, part of the Sec protein translocase complex. Interacts with the SecYEG preprotein conducting channel. Has a central role in coupling the hydrolysis of ATP to the transfer of proteins into and across the cell membrane, serving as an ATP-driven molecular motor driving the stepwise translocation of polypeptide chains across the membrane. In Symbiobacterium thermophilum (strain DSM 24528 / JCM 14929 / IAM 14863 / T), this protein is Protein translocase subunit SecA.